Consider the following 352-residue polypeptide: MGLDDRLDRIVARSEELQAALAEGLVGEAFAKASREYAELEPIVDRIGELRLAEQEERQSQALLADPEMRELAEAELEDLRARIPVLRQDIRIAMLPRDEADERSAILEIRPAAGGDEAALFAAELFDAYRRYAALRGWRFEIMEFDESELGGLREGIANITGRGVFARLKYESGVHRVQRVPATESQGRIHTSTVTVAVLPEAGDVDVQINDGDLRIDVYRASGAGGQHVNKTESAVRITHLPTGLVVAMQEEKSQHKNRAKAMKILMARLYERERAAAHATRAADRKSQVGTGDRSERIRTYNFPQGRVTDHRINLTAYKIDRVMMGEFDEFVDALTQDEQASLLAAEGL.

At Q229 the chain carries N5-methylglutamine.

It belongs to the prokaryotic/mitochondrial release factor family. Post-translationally, methylated by PrmC. Methylation increases the termination efficiency of RF1.

It localises to the cytoplasm. Its function is as follows. Peptide chain release factor 1 directs the termination of translation in response to the peptide chain termination codons UAG and UAA. In Gluconacetobacter diazotrophicus (strain ATCC 49037 / DSM 5601 / CCUG 37298 / CIP 103539 / LMG 7603 / PAl5), this protein is Peptide chain release factor 1.